A 311-amino-acid polypeptide reads, in one-letter code: Ribosomal RNA small subunit methyltransferase H (311 aa).

Residues 33–35 (AGH), D53, F80, D101, and Q108 contribute to the S-adenosyl-L-methionine site.

Belongs to the methyltransferase superfamily. RsmH family.

Its subcellular location is the cytoplasm. The enzyme catalyses cytidine(1402) in 16S rRNA + S-adenosyl-L-methionine = N(4)-methylcytidine(1402) in 16S rRNA + S-adenosyl-L-homocysteine + H(+). Its function is as follows. Specifically methylates the N4 position of cytidine in position 1402 (C1402) of 16S rRNA. This chain is Ribosomal RNA small subunit methyltransferase H, found in Geobacter sulfurreducens (strain ATCC 51573 / DSM 12127 / PCA).